The chain runs to 476 residues: Calcium/calmodulin-dependent protein kinase type 1G (476 aa).

The region spanning 23–277 is the Protein kinase domain; the sequence is FIFMEVLGSG…CEKALRHPWI (255 aa). Residues 29 to 37 and K52 each bind ATP; that span reads LGSGAFSEV. The active-site Proton acceptor is D143. Residues 277 to 317 are autoinhibitory domain; that stretch reads IDGNTALHRDIYPSVSLQIQKNFAKSKWRQAFNAAAVVHHM. Residues 297 to 318 are calmodulin-binding; it reads KNFAKSKWRQAFNAAAVVHHMR. Positions 326 to 387 are disordered; that stretch reads SPSVRQEVEN…SSRPSAPGGR (62 aa).

It belongs to the protein kinase superfamily. CAMK Ser/Thr protein kinase family. CaMK subfamily. Post-translationally, prenylated on Cys-473.

It localises to the cytoplasm. The protein localises to the golgi apparatus membrane. The protein resides in the cell membrane. It catalyses the reaction L-seryl-[protein] + ATP = O-phospho-L-seryl-[protein] + ADP + H(+). It carries out the reaction L-threonyl-[protein] + ATP = O-phospho-L-threonyl-[protein] + ADP + H(+). With respect to regulation, activated by Ca(2+)/calmodulin. Binding of calmodulin is thought to result in a conformational change and leads to activation through phosphorylation by CAMKK1. In terms of biological role, calcium/calmodulin-dependent protein kinase belonging to a proposed calcium-triggered signaling cascade. In vitro phosphorylates transcription factor CREB1. The protein is Calcium/calmodulin-dependent protein kinase type 1G (Camk1g) of Rattus norvegicus (Rat).